A 473-amino-acid polypeptide reads, in one-letter code: Ornithine decarboxylase (473 aa).

An N6-(pyridoxal phosphate)lysine modification is found at Lys-106. Pyridoxal 5'-phosphate-binding positions include Ser-240, Gly-277, and 313–316; that span reads EPGR. 367 to 368 is a substrate binding site; the sequence is FD. Residue Cys-417 is the Proton donor; shared with dimeric partner of the active site. Residue Asp-418 participates in substrate binding. Tyr-447 contacts pyridoxal 5'-phosphate.

Belongs to the Orn/Lys/Arg decarboxylase class-II family. As to quaternary structure, homodimer. Only the dimer is catalytically active, as the active sites are constructed of residues from both monomers. It depends on pyridoxal 5'-phosphate as a cofactor.

Its subcellular location is the cytoplasm. The catalysed reaction is L-ornithine + H(+) = putrescine + CO2. It participates in amine and polyamine biosynthesis; putrescine biosynthesis via L-ornithine pathway; putrescine from L-ornithine: step 1/1. Its activity is regulated as follows. Inhibited by antizyme (AZ) OAZ1 in response to polyamine levels. AZ inhibits the assembly of the functional homodimer by binding to ODC monomers and targeting them for ubiquitin-independent proteolytic destruction by the 26S proteasome. In terms of biological role, catalyzes the first and rate-limiting step of polyamine biosynthesis that converts ornithine into putrescine, which is the precursor for the polyamines, spermidine and spermine. Polyamines are essential for cell proliferation and are implicated in cellular processes, ranging from DNA replication to apoptosis. The protein is Ornithine decarboxylase (SPE1) of Candida albicans (strain SC5314 / ATCC MYA-2876) (Yeast).